The following is a 180-amino-acid chain: Large ribosomal subunit protein uL5 (180 aa).

The protein belongs to the universal ribosomal protein uL5 family. As to quaternary structure, part of the 50S ribosomal subunit; part of the 5S rRNA/L5/L18/L25 subcomplex. Contacts the 5S rRNA and the P site tRNA. Forms a bridge to the 30S subunit in the 70S ribosome.

This is one of the proteins that bind and probably mediate the attachment of the 5S RNA into the large ribosomal subunit, where it forms part of the central protuberance. In the 70S ribosome it contacts protein S13 of the 30S subunit (bridge B1b), connecting the 2 subunits; this bridge is implicated in subunit movement. Contacts the P site tRNA; the 5S rRNA and some of its associated proteins might help stabilize positioning of ribosome-bound tRNAs. This is Large ribosomal subunit protein uL5 from Streptococcus agalactiae serotype Ia (strain ATCC 27591 / A909 / CDC SS700).